A 187-amino-acid chain; its full sequence is Urease accessory protein UreE (187 aa).

The tract at residues 154-187 is disordered; that stretch reads RANSAQGHGHSHGHSHSHDHHGYHHHGDGNWHKH. Over residues 162-177 the composition is skewed to basic residues; that stretch reads GHSHGHSHSHDHHGYH. Residues 178–187 are compositionally biased toward basic and acidic residues; sequence HHGDGNWHKH.

Belongs to the UreE family.

The protein localises to the cytoplasm. Its function is as follows. Involved in urease metallocenter assembly. Binds nickel. Probably functions as a nickel donor during metallocenter assembly. The protein is Urease accessory protein UreE of Actinobacillus pleuropneumoniae (Haemophilus pleuropneumoniae).